The primary structure comprises 350 residues: Probable flap endonuclease 1 homolog (350 aa).

The segment at 1-95 is N-domain; the sequence is MGITKLAHLI…AVLEKRAQST (95 aa). Residue aspartate 34 coordinates Mg(2+). Position 61 (arginine 61) interacts with DNA. Mg(2+)-binding residues include aspartate 77, glutamate 130, glutamate 132, aspartate 151, and aspartate 153. An I-domain region spans residues 110–223; it reads NQECLRLLHL…SRALKLIKEH (114 aa). Glutamate 130 is a binding site for DNA. Residues glycine 201 and aspartate 203 each coordinate DNA. Aspartate 203 contacts Mg(2+). The interval 317 to 325 is interaction with PCNA; that stretch reads RQSRLEDFF.

It belongs to the XPG/RAD2 endonuclease family. FEN1 subfamily. In terms of assembly, interacts with PCNA. Three molecules of fen1 bind to one PCNA trimer with each molecule binding to one PCNA monomer. PCNA stimulates the nuclease activity without altering cleavage specificity. Requires Mg(2+) as cofactor. Phosphorylated. Phosphorylation upon DNA damage induces relocalization to the nuclear plasma.

Its subcellular location is the nucleus. The protein resides in the nucleolus. It localises to the nucleoplasm. It is found in the mitochondrion. Structure-specific nuclease with 5'-flap endonuclease and 5'-3' exonuclease activities involved in DNA replication and repair. During DNA replication, cleaves the 5'-overhanging flap structure that is generated by displacement synthesis when DNA polymerase encounters the 5'-end of a downstream Okazaki fragment. It enters the flap from the 5'-end and then tracks to cleave the flap base, leaving a nick for ligation. Also involved in the long patch base excision repair (LP-BER) pathway, by cleaving within the apurinic/apyrimidinic (AP) site-terminated flap. Acts as a genome stabilization factor that prevents flaps from equilibrating into structures that lead to duplications and deletions. Also possesses 5'-3' exonuclease activity on nicked or gapped double-stranded DNA, and exhibits RNase H activity. Also involved in replication and repair of rDNA and in repairing mitochondrial DNA. The chain is Probable flap endonuclease 1 homolog from Danio rerio (Zebrafish).